Reading from the N-terminus, the 246-residue chain is UDP-N-acetyl-D-mannosaminuronic acid transferase (246 aa).

The protein belongs to the glycosyltransferase 26 family.

It carries out the reaction UDP-N-acetyl-alpha-D-mannosaminouronate + N-acetyl-alpha-D-glucosaminyl-di-trans,octa-cis-undecaprenyl diphosphate = beta-D-ManNAcA-(1-&gt;4)-alpha-D-GlcNAc-di-trans,octa-cis-undecaprenyl diphosphate + UDP + H(+). It functions in the pathway bacterial outer membrane biogenesis; enterobacterial common antigen biosynthesis. In terms of biological role, catalyzes the synthesis of Und-PP-GlcNAc-ManNAcA (Lipid II), the second lipid-linked intermediate involved in enterobacterial common antigen (ECA) synthesis. The polypeptide is UDP-N-acetyl-D-mannosaminuronic acid transferase (Klebsiella pneumoniae (strain 342)).